The primary structure comprises 372 residues: Flagellar P-ring protein (372 aa).

The N-terminal stretch at 1 to 26 (MNLSSLSFRLLATLLGACVVVAPASA) is a signal peptide.

It belongs to the FlgI family. In terms of assembly, the basal body constitutes a major portion of the flagellar organelle and consists of four rings (L,P,S, and M) mounted on a central rod.

It is found in the periplasm. The protein resides in the bacterial flagellum basal body. Functionally, assembles around the rod to form the L-ring and probably protects the motor/basal body from shearing forces during rotation. The chain is Flagellar P-ring protein from Xanthomonas oryzae pv. oryzae (strain MAFF 311018).